Consider the following 275-residue polypeptide: Transmembrane protein 106B (275 aa).

The interval 1 to 24 (MGKSLSHLPLHSNKEDGYDGVTST) is disordered. Glycine 2 carries the N-myristoyl glycine lipid modification. The Cytoplasmic portion of the chain corresponds to 2–97 (GKSLSHLPLH…QRLRPRRTKL (96 aa)). Residue serine 34 is modified to Phosphoserine. The helical transmembrane segment at 98–118 (YVMASVFVCLLLSGLAVFFLF) threads the bilayer. Residues 119 to 275 (PRSIDVKYIG…EYLNVLQPQQ (157 aa)) are Lumenal-facing. 4 N-linked (GlcNAc...) asparagine glycosylation sites follow: asparagine 146, asparagine 152, asparagine 165, and asparagine 184. Cysteine 215 and cysteine 254 form a disulfide bridge. An N-linked (GlcNAc...) asparagine glycan is attached at asparagine 257.

This sequence belongs to the TMEM106 family. In terms of assembly, can form homomers. Interacts (via N-terminus) with MAP6 (via C-terminus). Interacts (via C-terminus) with the vacuolar-type ATPase subunit ATP6AP1. Interacts (via N-terminus) with AP2M1 and CLTC. Interacts with TMEM106C. In terms of tissue distribution, expressed in cortical neurons (at protein level).

The protein localises to the late endosome membrane. It is found in the lysosome membrane. It localises to the cell membrane. Functionally, involved in dendrite morphogenesis and maintenance by regulating lysosomal trafficking. May act as a molecular brake for retrograde transport of late endosomes/lysosomes, possibly via its interaction with MAP6. In neurons, may also play a role in the regulation of lysosomal size and responsiveness to stress. Required for proper lysosomal acidification. Its function is as follows. In neurons, involved in the transport of late endosomes/lysosomes. May be involved in dendrite morphogenesis and maintenance by regulating lysosomal trafficking. May act as a molecular brake for retrograde transport of late endosomes/lysosomes, possibly via its interaction with MAP6. In motoneurons, may mediate the axonal transport of lysosomes and axonal sorting at the initial segment. It remains unclear whether TMEM106B affects the transport of moving lysosomes in the anterograde or retrograde direction in neurites and whether it is particularly important in the sorting of lysosomes in axons or in dendrites. In neurons, may also play a role in the regulation of lysosomal size and responsiveness to stress. Required for proper lysosomal acidification. The sequence is that of Transmembrane protein 106B (Tmem106b) from Rattus norvegicus (Rat).